The chain runs to 299 residues: Oxygen-dependent coproporphyrinogen-III oxidase (299 aa).

A substrate-binding site is contributed by serine 92. A divalent metal cation-binding residues include histidine 96 and histidine 106. The Proton donor role is filled by histidine 106. Residue asparagine 108 to arginine 110 coordinates substrate. A divalent metal cation-binding residues include histidine 145 and histidine 175. The tract at residues tyrosine 240–glutamate 275 is important for dimerization. A substrate-binding site is contributed by glycine 258 to arginine 260.

Belongs to the aerobic coproporphyrinogen-III oxidase family. In terms of assembly, homodimer. A divalent metal cation serves as cofactor.

It is found in the cytoplasm. It carries out the reaction coproporphyrinogen III + O2 + 2 H(+) = protoporphyrinogen IX + 2 CO2 + 2 H2O. It functions in the pathway porphyrin-containing compound metabolism; protoporphyrin-IX biosynthesis; protoporphyrinogen-IX from coproporphyrinogen-III (O2 route): step 1/1. Its function is as follows. Involved in the heme biosynthesis. Catalyzes the aerobic oxidative decarboxylation of propionate groups of rings A and B of coproporphyrinogen-III to yield the vinyl groups in protoporphyrinogen-IX. The protein is Oxygen-dependent coproporphyrinogen-III oxidase of Klebsiella pneumoniae subsp. pneumoniae (strain ATCC 700721 / MGH 78578).